Reading from the N-terminus, the 409-residue chain is Elongation factor Tu (409 aa).

A tr-type G domain is found at 10–214 (KPHVNIGTIG…AVDSYIPDPE (205 aa)). The G1 stretch occupies residues 19 to 26 (GHVDHGKT). 19–26 (GHVDHGKT) contacts GTP. Thr-26 contributes to the Mg(2+) binding site. The interval 60-64 (GITIN) is G2. Positions 81–84 (DCPG) are G3. Residues 81–85 (DCPGH) and 136–139 (NKED) contribute to the GTP site. Residues 136–139 (NKED) are G4. Residues 174–176 (SGL) form a G5 region.

Belongs to the TRAFAC class translation factor GTPase superfamily. Classic translation factor GTPase family. EF-Tu/EF-1A subfamily. Monomer.

Its subcellular location is the cytoplasm. The enzyme catalyses GTP + H2O = GDP + phosphate + H(+). Functionally, GTP hydrolase that promotes the GTP-dependent binding of aminoacyl-tRNA to the A-site of ribosomes during protein biosynthesis. The protein is Elongation factor Tu of Trichormus variabilis (strain ATCC 29413 / PCC 7937) (Anabaena variabilis).